Consider the following 341-residue polypeptide: L-threonine 3-dehydrogenase (341 aa).

Position 38 (cysteine 38) interacts with Zn(2+). Catalysis depends on charge relay system residues threonine 40 and histidine 43. Histidine 63, glutamate 64, cysteine 93, cysteine 96, cysteine 99, and cysteine 107 together coordinate Zn(2+). NAD(+)-binding positions include isoleucine 175, aspartate 195, arginine 200, 262 to 264, and 286 to 287; these read LGI and IY.

Belongs to the zinc-containing alcohol dehydrogenase family. In terms of assembly, homotetramer. The cofactor is Zn(2+).

It localises to the cytoplasm. The enzyme catalyses L-threonine + NAD(+) = (2S)-2-amino-3-oxobutanoate + NADH + H(+). Its pathway is amino-acid degradation; L-threonine degradation via oxydo-reductase pathway; glycine from L-threonine: step 1/2. Catalyzes the NAD(+)-dependent oxidation of L-threonine to 2-amino-3-ketobutyrate. The chain is L-threonine 3-dehydrogenase from Cronobacter sakazakii (strain ATCC BAA-894) (Enterobacter sakazakii).